We begin with the raw amino-acid sequence, 420 residues long: Dynein axonemal assembly factor 4 (420 aa).

Residues V3–S87 form the CS domain. The segment at E7 to S103 is mediates interaction with ESR1 and STUB1. The span at E164 to A192 shows a compositional bias: basic and acidic residues. The disordered stretch occupies residues E164–R212. TPR repeat units follow at residues P288 to I321, P322 to P355, and M364 to N397.

Interacts with ZMYND10. Interacts with ESR1 and ESR2. Interacts with STUB1. Interacts with DNAAF2. Interacts with CCT3, CCT4, CCT5 and CCT8. Interacts with DNAAF6/PIH1D3.

It localises to the nucleus. Its subcellular location is the cytoplasm. The protein localises to the dynein axonemal particle. The protein resides in the cell projection. It is found in the neuron projection. Functionally, involved in neuronal migration during development of the cerebral neocortex. May regulate the stability and proteasomal degradation of the estrogen receptors that play an important role in neuronal differentiation, survival and plasticity. Axonemal dynein assembly factor required for ciliary motility. The protein is Dynein axonemal assembly factor 4 of Mus musculus (Mouse).